The chain runs to 575 residues: Suppressor of tumorigenicity 7 protein-like (575 aa).

2 helical membrane passes run 36 to 56 (GLAG…LYAL) and 80 to 100 (FYVA…IFEW). Residues 125-147 (GTESSISEPGSPSRNRENETSRQ) are disordered. Over residues 126–137 (TESSISEPGSPS) the composition is skewed to polar residues.

The protein belongs to the ST7 family.

Its subcellular location is the membrane. This Homo sapiens (Human) protein is Suppressor of tumorigenicity 7 protein-like (ST7L).